Reading from the N-terminus, the 117-residue chain is MQESINGNLSEERISGTQQSETRNGAPVNGSSEQQGTSGTEPNQLRFQSSVSDSERERQKAIDLEHRRAAFARHFGCAPGSEKHVENYSSFDEKDTRVQLAEFYRFNDGHFKKWGYF.

The segment covering 1–52 has biased composition (polar residues); sequence MQESINGNLSEERISGTQQSETRNGAPVNGSSEQQGTSGTEPNQLRFQSSVS. The interval 1 to 60 is disordered; it reads MQESINGNLSEERISGTQQSETRNGAPVNGSSEQQGTSGTEPNQLRFQSSVSDSERERQK.

The protein belongs to the microviridae B protein family. In terms of assembly, component of the procapsid complex composed of 60 copies of the internally located B, 240 copies of the external scaffolding protein D, 60 copies of each of the viral structural proteins F and G proteins, and 12 copies of H. The proteolytic cleavage of the internal scaffolding protein B releases the scaffold protein in order to continue virion assembly.

The protein localises to the host cytoplasm. Functionally, participates in the assembly of the viral procapsid in the cytoplasm. Forms first a 12S pre-assembly complex with protein H, and F and G pentamers, then twelve 12S complexes are joined by the D protein to form the procapsid. Internal scaffold protein B is released from the procapsid upon genome packaging. Autoproteolytic activity cleaves protein B and probably facilitates its removal through the pores of the procapsid. The protein is Internal scaffolding protein B (B) of Escherichia coli (Bacteriophage alpha-3).